The primary structure comprises 393 residues: Elongation factor Tu (393 aa).

The tr-type G domain occupies 6-204; the sequence is KPHINVGTIG…ALEKIELPVR (199 aa). The interval 15–22 is G1; that stretch reads GHVDHGKT. 15-22 contributes to the GTP binding site; that stretch reads GHVDHGKT. Threonine 22 is a Mg(2+) binding site. A G2 region spans residues 58-62; that stretch reads GITIS. Positions 79–82 are G3; it reads DCPG. Residues 79–83 and 134–137 contribute to the GTP site; these read DCPGH and NKCD. The tract at residues 134 to 137 is G4; sequence NKCD. Residues 172-174 are G5; it reads SAV.

This sequence belongs to the TRAFAC class translation factor GTPase superfamily. Classic translation factor GTPase family. EF-Tu/EF-1A subfamily. In terms of assembly, monomer.

The protein localises to the cytoplasm. The catalysed reaction is GTP + H2O = GDP + phosphate + H(+). In terms of biological role, GTP hydrolase that promotes the GTP-dependent binding of aminoacyl-tRNA to the A-site of ribosomes during protein biosynthesis. In Anaplasma marginale (strain St. Maries), this protein is Elongation factor Tu.